Here is a 340-residue protein sequence, read N- to C-terminus: MSDALKPLIGLAADRALTRTEAETAFAALFNGEATPSQMGGLLMALRTRGETVDEYAAAAAVMRAKCNKVSAPADAMDIVGTGGDGKGTLNISTATAFVVAGAGVPVAKHGNRNLSSKSGAADALTEMGIQVMVGPKVVEKSLKEAGICFMMAPMHHPAIAHVMPTRQELGTRTIFNILGPLTNPADVKRQLTGAFSRDLIRPMAETLKQLGSEVAWLVHGSDGTDELTITGVSWVAGLSEDGNISEFEVHPEEAGLPEHPFEAIVGGTPAENAAAFRALLEGTPSAYRDAVLLNSAAALKVAGVVSSLKEGAERAAESIDSGAALGKVTAVARITSEAS.

Residues glycine 81, 84–85, threonine 89, 91–94, 109–117, and alanine 121 each bind 5-phospho-alpha-D-ribose 1-diphosphate; these read GD, NIST, and KHGNRNLSS. Glycine 81 is a binding site for anthranilate. A Mg(2+)-binding site is contributed by serine 93. Asparagine 112 is an anthranilate binding site. Anthranilate is bound at residue arginine 167. Aspartate 226 and glutamate 227 together coordinate Mg(2+).

The protein belongs to the anthranilate phosphoribosyltransferase family. Homodimer. Mg(2+) serves as cofactor.

It catalyses the reaction N-(5-phospho-beta-D-ribosyl)anthranilate + diphosphate = 5-phospho-alpha-D-ribose 1-diphosphate + anthranilate. The protein operates within amino-acid biosynthesis; L-tryptophan biosynthesis; L-tryptophan from chorismate: step 2/5. In terms of biological role, catalyzes the transfer of the phosphoribosyl group of 5-phosphorylribose-1-pyrophosphate (PRPP) to anthranilate to yield N-(5'-phosphoribosyl)-anthranilate (PRA). The sequence is that of Anthranilate phosphoribosyltransferase from Ruegeria sp. (strain TM1040) (Silicibacter sp.).